The chain runs to 65 residues: Large ribosomal subunit protein bL35 (65 aa).

It belongs to the bacterial ribosomal protein bL35 family.

This is Large ribosomal subunit protein bL35 from Ruminiclostridium cellulolyticum (strain ATCC 35319 / DSM 5812 / JCM 6584 / H10) (Clostridium cellulolyticum).